We begin with the raw amino-acid sequence, 55 residues long: Large ribosomal subunit protein bL33 (55 aa).

It belongs to the bacterial ribosomal protein bL33 family.

This Blochmanniella pennsylvanica (strain BPEN) protein is Large ribosomal subunit protein bL33.